A 339-amino-acid polypeptide reads, in one-letter code: Phenylalanine--tRNA ligase alpha subunit (339 aa).

Residue E254 coordinates Mg(2+).

The protein belongs to the class-II aminoacyl-tRNA synthetase family. Phe-tRNA synthetase alpha subunit type 1 subfamily. In terms of assembly, tetramer of two alpha and two beta subunits. Requires Mg(2+) as cofactor.

The protein resides in the cytoplasm. The catalysed reaction is tRNA(Phe) + L-phenylalanine + ATP = L-phenylalanyl-tRNA(Phe) + AMP + diphosphate + H(+). The chain is Phenylalanine--tRNA ligase alpha subunit from Clostridium acetobutylicum (strain ATCC 824 / DSM 792 / JCM 1419 / IAM 19013 / LMG 5710 / NBRC 13948 / NRRL B-527 / VKM B-1787 / 2291 / W).